The following is a 292-amino-acid chain: Elongation factor Ts (292 aa).

Positions 80-83 (TDFV) are involved in Mg(2+) ion dislocation from EF-Tu.

This sequence belongs to the EF-Ts family.

The protein localises to the cytoplasm. Its function is as follows. Associates with the EF-Tu.GDP complex and induces the exchange of GDP to GTP. It remains bound to the aminoacyl-tRNA.EF-Tu.GTP complex up to the GTP hydrolysis stage on the ribosome. The protein is Elongation factor Ts of Ralstonia nicotianae (strain ATCC BAA-1114 / GMI1000) (Ralstonia solanacearum).